Here is a 564-residue protein sequence, read N- to C-terminus: Serine/threonine-protein kinase PknA (564 aa).

Residues 9–271 (YRVIKTLGSG…TAREMLEALQ (263 aa)) enclose the Protein kinase domain. Residues 15-23 (LGSGGFGET) and K40 contribute to the ATP site. Catalysis depends on D139, which acts as the Proton acceptor. The segment covering 360–406 (QPVTQTTSLPSETTISNNDTPTVEPSPTDTPETPISQTVTQDPTPQA) has biased composition (polar residues). The disordered stretch occupies residues 360–458 (QPVTQTTSLP…PVEATDRPSP (99 aa)). The segment covering 428–445 (TTEPTTSVPQPTTPSEPQ) has biased composition (low complexity).

Belongs to the protein kinase superfamily. Ser/Thr protein kinase family.

The enzyme catalyses L-seryl-[protein] + ATP = O-phospho-L-seryl-[protein] + ADP + H(+). The catalysed reaction is L-threonyl-[protein] + ATP = O-phospho-L-threonyl-[protein] + ADP + H(+). Its function is as follows. Probably required for both normal cellular growth and differentiation. Inactivation of pknA leads to colonies that appear light green and rough in the absence of combined nitrogen. This Nostoc sp. (strain PCC 7120 / SAG 25.82 / UTEX 2576) protein is Serine/threonine-protein kinase PknA (pknA).